A 274-amino-acid chain; its full sequence is tRNA-cytidine(32) 2-sulfurtransferase (274 aa).

Residues 40-45 (SGGKDS) carry the PP-loop motif motif. The [4Fe-4S] cluster site is built by Cys115, Cys118, and Cys206.

The protein belongs to the TtcA family. As to quaternary structure, homodimer. The cofactor is Mg(2+). [4Fe-4S] cluster is required as a cofactor.

It localises to the cytoplasm. It catalyses the reaction cytidine(32) in tRNA + S-sulfanyl-L-cysteinyl-[cysteine desulfurase] + AH2 + ATP = 2-thiocytidine(32) in tRNA + L-cysteinyl-[cysteine desulfurase] + A + AMP + diphosphate + H(+). The protein operates within tRNA modification. In terms of biological role, catalyzes the ATP-dependent 2-thiolation of cytidine in position 32 of tRNA, to form 2-thiocytidine (s(2)C32). The sulfur atoms are provided by the cysteine/cysteine desulfurase (IscS) system. The sequence is that of tRNA-cytidine(32) 2-sulfurtransferase from Pseudomonas putida (strain GB-1).